A 232-amino-acid chain; its full sequence is V-type ATP synthase subunit E (232 aa).

This sequence belongs to the V-ATPase E subunit family.

Its function is as follows. Produces ATP from ADP in the presence of a proton gradient across the membrane. The chain is V-type ATP synthase subunit E (atpE) from Treponema pallidum (strain Nichols).